The primary structure comprises 352 residues: Putative F-box protein At5g14160 (352 aa).

One can recognise an F-box domain in the interval 14 to 60; it reads GVDWSELPEDVIRLVLRRLRLSDFHRARAVCSTWCRVWGDCVSKPNQ.

The protein is Putative F-box protein At5g14160 of Arabidopsis thaliana (Mouse-ear cress).